We begin with the raw amino-acid sequence, 222 residues long: Ribonuclease T (222 aa).

The region spanning 20–194 is the Exonuclease domain; that stretch reads VVIDVETAGF…YDTERTAELF (175 aa). 4 residues coordinate Mg(2+): Asp23, Glu25, His181, and Asp186. Catalysis depends on His181, which acts as the Proton donor/acceptor.

It belongs to the RNase T family. As to quaternary structure, homodimer. Requires Mg(2+) as cofactor.

Functionally, trims short 3' overhangs of a variety of RNA species, leaving a one or two nucleotide 3' overhang. Responsible for the end-turnover of tRNA: specifically removes the terminal AMP residue from uncharged tRNA (tRNA-C-C-A). Also appears to be involved in tRNA biosynthesis. This is Ribonuclease T from Shewanella sp. (strain MR-4).